A 102-amino-acid chain; its full sequence is Large ribosomal subunit protein uL23 (102 aa).

Belongs to the universal ribosomal protein uL23 family. As to quaternary structure, part of the 50S ribosomal subunit. Contacts protein L29, and trigger factor when it is bound to the ribosome.

Its function is as follows. One of the early assembly proteins it binds 23S rRNA. One of the proteins that surrounds the polypeptide exit tunnel on the outside of the ribosome. Forms the main docking site for trigger factor binding to the ribosome. The protein is Large ribosomal subunit protein uL23 of Cutibacterium acnes (strain DSM 16379 / KPA171202) (Propionibacterium acnes).